We begin with the raw amino-acid sequence, 413 residues long: Elongation factor 1-alpha (413 aa).

Positions 5–211 (KEHMNLAFIG…DDLEAPEKPV (207 aa)) constitute a tr-type G domain. The G1 stretch occupies residues 14–21 (GHVDHGKS). Residue 14 to 21 (GHVDHGKS) coordinates GTP. Position 21 (serine 21) interacts with Mg(2+). Residues 60-64 (GVTID) are G2. The segment at 81-84 (DCPG) is G3. Residues 81-85 (DCPGH) and 136-139 (NKMD) contribute to the GTP site. The G4 stretch occupies residues 136 to 139 (NKMD). The interval 175–177 (SAF) is G5.

The protein belongs to the TRAFAC class translation factor GTPase superfamily. Classic translation factor GTPase family. EF-Tu/EF-1A subfamily.

It is found in the cytoplasm. The catalysed reaction is GTP + H2O = GDP + phosphate + H(+). In terms of biological role, GTP hydrolase that promotes the GTP-dependent binding of aminoacyl-tRNA to the A-site of ribosomes during protein biosynthesis. The sequence is that of Elongation factor 1-alpha from Methanothermobacter thermautotrophicus (strain ATCC 29096 / DSM 1053 / JCM 10044 / NBRC 100330 / Delta H) (Methanobacterium thermoautotrophicum).